The chain runs to 299 residues: Recombination-associated protein RdgC (299 aa).

Belongs to the RdgC family.

It is found in the cytoplasm. The protein resides in the nucleoid. In terms of biological role, may be involved in recombination. The polypeptide is Recombination-associated protein RdgC (Neisseria meningitidis serogroup A / serotype 4A (strain DSM 15465 / Z2491)).